A 163-amino-acid chain; its full sequence is Putative 4-hydroxy-4-methyl-2-oxoglutarate aldolase (163 aa).

Substrate is bound by residues 76–79 (GDMI) and arginine 98. Aspartate 99 is a binding site for a divalent metal cation.

Belongs to the class II aldolase/RraA-like family. As to quaternary structure, homotrimer. A divalent metal cation is required as a cofactor.

It carries out the reaction 4-hydroxy-4-methyl-2-oxoglutarate = 2 pyruvate. The catalysed reaction is oxaloacetate + H(+) = pyruvate + CO2. In terms of biological role, catalyzes the aldol cleavage of 4-hydroxy-4-methyl-2-oxoglutarate (HMG) into 2 molecules of pyruvate. Also contains a secondary oxaloacetate (OAA) decarboxylase activity due to the common pyruvate enolate transition state formed following C-C bond cleavage in the retro-aldol and decarboxylation reactions. In Pseudomonas fluorescens (strain SBW25), this protein is Putative 4-hydroxy-4-methyl-2-oxoglutarate aldolase.